Consider the following 31-residue polypeptide: Cyclotide hyen-I (31 aa).

Positions 1–31 (GSTPCGESCVWIPCISGIVGCSCSNKVCYMD) form a cross-link, cyclopeptide (Gly-Asp). 3 cysteine pairs are disulfide-bonded: C5-C21, C9-C23, and C14-C28.

Post-translationally, this is a cyclic peptide. Detected in seeds (at protein level).

Probably participates in a plant defense mechanism. This chain is Cyclotide hyen-I, found in Pigea enneasperma (Spade flower).